The following is an 82-amino-acid chain: MVDINQIPTRRPFHRRHKTCPFSGANAPKIDYKDVKLLQRYISERGKIVPSRITAVSQKKQRELAKAIKRARFLGLLPYVVK.

A disordered region spans residues 1–20 (MVDINQIPTRRPFHRRHKTC).

It belongs to the bacterial ribosomal protein bS18 family. Part of the 30S ribosomal subunit. Forms a tight heterodimer with protein bS6.

Functionally, binds as a heterodimer with protein bS6 to the central domain of the 16S rRNA, where it helps stabilize the platform of the 30S subunit. This is Small ribosomal subunit protein bS18 from Brucella suis (strain ATCC 23445 / NCTC 10510).